Consider the following 589-residue polypeptide: Guanylate-binding protein 2 (589 aa).

The interval 1 to 309 (MASEIHMLQP…GAISSGSLPC (309 aa)) is GTPase domain (Globular). A GB1/RHD3-type G domain is found at 35–276 (NQPVVVVAIV…FTSYIFSYSA (242 aa)). Residues 45–52 (GLYRTGKS), 181–182 (RD), and leucine 245 each bind GTP. Cysteine 586 carries the post-translational modification Cysteine methyl ester. A lipid anchor (S-geranylgeranyl cysteine) is attached at cysteine 586. The propeptide at 587–589 (TIL) is removed in mature form.

This sequence belongs to the TRAFAC class dynamin-like GTPase superfamily. GB1/RHD3 GTPase family. GB1 subfamily. In terms of assembly, homodimer; homodimerization occurs upon GTP-binding and is required for the association with membranous structures. Heterodimer with other family members, including GBP1, GBP3, GBP4 and GBP5. Post-translationally, isoprenylation is required for proper subcellular location. Widely expressed.

Its subcellular location is the cytoplasmic vesicle membrane. The protein resides in the golgi apparatus membrane. It localises to the cytoplasm. The protein localises to the perinuclear region. The catalysed reaction is GTP + H2O = GDP + phosphate + H(+). Functionally, interferon (IFN)-inducible GTPase that plays important roles in innate immunity against a diverse range of bacterial, viral and protozoan pathogens. Hydrolyzes GTP to GMP in 2 consecutive cleavage reactions, but the major reaction product is GDP. Following infection, recruited to the pathogen-containing vacuoles or vacuole-escaped bacteria and acts as a positive regulator of inflammasome assembly by promoting the release of inflammasome ligands from bacteria. Acts by promoting lysis of pathogen-containing vacuoles, releasing pathogens into the cytosol. Following pathogen release in the cytosol, promotes recruitment of proteins that mediate bacterial cytolysis: this liberates ligands that are detected by inflammasomes, such as lipopolysaccharide (LPS) that activates the non-canonical CASP4/CASP11 inflammasome or double-stranded DNA (dsDNA) that activates the AIM2 inflammasome. Confers protection to the protozoan pathogen Toxoplasma gondii. Independently of its GTPase activity, acts as an inhibitor of various viruses infectivity by inhibiting FURIN-mediated maturation of viral envelope proteins. The polypeptide is Guanylate-binding protein 2 (Gbp2) (Rattus norvegicus (Rat)).